Here is a 252-residue protein sequence, read N- to C-terminus: Pyrroloquinoline-quinone synthase (252 aa).

It belongs to the PqqC family.

It catalyses the reaction 6-(2-amino-2-carboxyethyl)-7,8-dioxo-1,2,3,4,7,8-hexahydroquinoline-2,4-dicarboxylate + 3 O2 = pyrroloquinoline quinone + 2 H2O2 + 2 H2O + H(+). It participates in cofactor biosynthesis; pyrroloquinoline quinone biosynthesis. In terms of biological role, ring cyclization and eight-electron oxidation of 3a-(2-amino-2-carboxyethyl)-4,5-dioxo-4,5,6,7,8,9-hexahydroquinoline-7,9-dicarboxylic-acid to PQQ. The protein is Pyrroloquinoline-quinone synthase of Acinetobacter baumannii (strain AB307-0294).